A 275-amino-acid chain; its full sequence is NH(3)-dependent NAD(+) synthetase (275 aa).

46 to 53 (GISGGQDS) provides a ligand contact to ATP. Position 52 (Asp-52) interacts with Mg(2+). Arg-140 lines the deamido-NAD(+) pocket. Thr-160 is an ATP binding site. Glu-165 contacts Mg(2+). Positions 173 and 180 each coordinate deamido-NAD(+). Residues Lys-189 and Thr-211 each coordinate ATP. 260 to 261 (HK) contacts deamido-NAD(+).

This sequence belongs to the NAD synthetase family. In terms of assembly, homodimer.

The catalysed reaction is deamido-NAD(+) + NH4(+) + ATP = AMP + diphosphate + NAD(+) + H(+). It functions in the pathway cofactor biosynthesis; NAD(+) biosynthesis; NAD(+) from deamido-NAD(+) (ammonia route): step 1/1. Catalyzes the ATP-dependent amidation of deamido-NAD to form NAD. Uses ammonia as a nitrogen source. This Escherichia coli O17:K52:H18 (strain UMN026 / ExPEC) protein is NH(3)-dependent NAD(+) synthetase.